Here is a 336-residue protein sequence, read N- to C-terminus: MNLSEYLAQADALAAECHALLAGLDVATRLDVAKGQLNALKDDRLNALQSALRMLPAEDRRAAGGAFNTLKQSIQAALDAFGQRQSAASGVVQVDATMPARGIWRGSLHPVTLVIDEISEIFRELGFTIALGPEAETEWYNFGALNFPPDHPAMELHDTLYLGEDTLLRTHTSPVQVRTLQRYAPPVRVLAPGQVYRRDFFDATHAPAFMQLEGLAVDEGVSFVDLKATLAEFARRFYGATRRVRFGPSYFPFVEPGAQMDVEVDLGDGKGLRWVEILGCGMVHPNVIEAAGLDSEKYTGWAFGMGPARIAMSRYGINDIRVLYDSDVRFLEQFAR.

Glutamate 255 lines the Mg(2+) pocket.

The protein belongs to the class-II aminoacyl-tRNA synthetase family. Phe-tRNA synthetase alpha subunit type 1 subfamily. As to quaternary structure, tetramer of two alpha and two beta subunits. The cofactor is Mg(2+).

It is found in the cytoplasm. It carries out the reaction tRNA(Phe) + L-phenylalanine + ATP = L-phenylalanyl-tRNA(Phe) + AMP + diphosphate + H(+). The polypeptide is Phenylalanine--tRNA ligase alpha subunit (Gemmatimonas aurantiaca (strain DSM 14586 / JCM 11422 / NBRC 100505 / T-27)).